Here is a 616-residue protein sequence, read N- to C-terminus: 2-isopropylmalate synthase (616 aa).

The segment at 1–34 (MSPNDAFISAPAKIETPVGPRNEGQPAWNKQRGS) is disordered. Residues 67-341 (PQWCAVDLRD…DPQLDFTDIR (275 aa)) form the Pyruvate carboxyltransferase domain. The Mg(2+) site is built by Asp76, His280, His282, and Asn316. Residues 490-616 (RTAPVEQIAL…NHEAVLAGGV (127 aa)) form a regulatory domain region.

This sequence belongs to the alpha-IPM synthase/homocitrate synthase family. LeuA type 2 subfamily. As to quaternary structure, homodimer. It depends on Mg(2+) as a cofactor.

It localises to the cytoplasm. It catalyses the reaction 3-methyl-2-oxobutanoate + acetyl-CoA + H2O = (2S)-2-isopropylmalate + CoA + H(+). Its pathway is amino-acid biosynthesis; L-leucine biosynthesis; L-leucine from 3-methyl-2-oxobutanoate: step 1/4. Inhibited by L-leucine, the pathway end product. Catalyzes the condensation of the acetyl group of acetyl-CoA with 3-methyl-2-oxobutanoate (2-ketoisovalerate) to form 3-carboxy-3-hydroxy-4-methylpentanoate (2-isopropylmalate). Complements an E.coli leuA deletion. In Corynebacterium glutamicum (strain ATCC 13032 / DSM 20300 / JCM 1318 / BCRC 11384 / CCUG 27702 / LMG 3730 / NBRC 12168 / NCIMB 10025 / NRRL B-2784 / 534), this protein is 2-isopropylmalate synthase.